A 681-amino-acid polypeptide reads, in one-letter code: Probable L-type lectin-domain containing receptor kinase S.7 (681 aa).

An N-terminal signal peptide occupies residues 1 to 21 (MSLSRKLLVIFFTWITALSMS). Residues 22 to 305 (KPIFVSSDNM…PSKKRRHRHN (284 aa)) lie on the Extracellular side of the membrane. The legume-lectin like stretch occupies residues 30–265 (NMNFTFKSFT…IHLIENWSFK (236 aa)). 7 N-linked (GlcNAc...) asparagine glycosylation sites follow: asparagine 32, asparagine 42, asparagine 86, asparagine 121, asparagine 135, asparagine 261, and asparagine 281. The chain crosses the membrane as a helical span at residues 306–326 (LAIGLGISCPVLICLALFVFG). Topologically, residues 327 to 681 (YFTLKKWKSV…EGDSIVYVVS (355 aa)) are cytoplasmic. The Protein kinase domain occupies 365-643 (FHSSRVIGRG…RVLQILNNEI (279 aa)). ATP is bound by residues 371 to 379 (IGRGAFGNV) and lysine 394. The active-site Proton acceptor is the aspartate 493.

In the C-terminal section; belongs to the protein kinase superfamily. Ser/Thr protein kinase family. It in the N-terminal section; belongs to the leguminous lectin family.

Its subcellular location is the cell membrane. It carries out the reaction L-seryl-[protein] + ATP = O-phospho-L-seryl-[protein] + ADP + H(+). The catalysed reaction is L-threonyl-[protein] + ATP = O-phospho-L-threonyl-[protein] + ADP + H(+). In terms of biological role, involved in resistance response to the pathogenic oomycetes Phytophthora infestans and Phytophthora capsici. This chain is Probable L-type lectin-domain containing receptor kinase S.7, found in Arabidopsis thaliana (Mouse-ear cress).